A 1319-amino-acid chain; its full sequence is Son of sevenless homolog 1 (1319 aa).

The region spanning 200–390 (TYYDLVKAFM…LNVQSGMEKI (191 aa)) is the DH domain. Residues 444–548 (FIMEGTLTRV…AALISLQYRS (105 aa)) enclose the PH domain. Positions 597 to 741 (GIPIIKAGTV…SITKIIQRKK (145 aa)) constitute an N-terminal Ras-GEF domain. Positions 780–1019 (HPIEIARQLT…FNKSLEIEPR (240 aa)) constitute a Ras-GEF domain. The segment at 1019–1101 (RHPKPLPRFP…ASGTSSNTDV (83 aa)) is disordered. Phosphoserine occurs at positions 1078 and 1082. 2 positions are modified to phosphoserine; by RPS6KA3: Ser1120 and Ser1147. Residues 1121–1319 (VSSISLSKGT…PPLLENAHSS (199 aa)) form a disordered region. Phosphoserine occurs at positions 1164, 1196, and 1215. The span at 1194–1203 (PESPPLLPPR) shows a compositional bias: pro residues. A compositionally biased stretch (pro residues) spans 1238–1250 (SPSPFTPPPPQTP). Ser1261 is modified (phosphoserine). Residues 1296-1309 (YKREHTHPSMHRDG) show a composition bias toward basic and acidic residues.

In terms of assembly, interacts (via C-terminus) with GRB2 (via SH3 domain). Forms a complex with phosphorylated MUC1 and GRB2 (via its SH3 domains). Interacts with phosphorylated LAT2. Interacts with NCK1 and NCK2. Part of a complex consisting of ABI1, EPS8 and SOS1. Interacts (Ser-1120 and Ser-1147 phosphorylated form) with YWHAB and YWHAE. Post-translationally, phosphorylation at Ser-1120 and Ser-1147 by RPS6KA3 create YWHAB and YWHAE binding sites and which contribute to the negative regulation of EGF-induced MAPK1/3 phosphorylation. As to expression, expressed in most embryonic and adult tissues.

Promotes the exchange of Ras-bound GDP by GTP. Probably by promoting Ras activation, regulates phosphorylation of MAP kinase MAPK3 in response to EGF. Catalytic component of a trimeric complex that participates in transduction of signals from Ras to Rac by promoting the Rac-specific guanine nucleotide exchange factor (GEF) activity. This is Son of sevenless homolog 1 (Sos1) from Mus musculus (Mouse).